The following is a 354-amino-acid chain: G protein alpha o subunit (354 aa).

Glycine 2 carries N-myristoyl glycine lipidation. Cysteine 3 is lipidated: S-palmitoyl cysteine. Residues 32 to 354 (KDIKLLLLGA…ANNLRGCGLY (323 aa)) enclose the G-alpha domain. A G1 motif region spans residues 35 to 48 (KLLLLGAGESGKST). Residues 40-47 (GAGESGKS), 176-182 (LRTRVKT), 201-205 (DVGGQ), 270-273 (NKKD), and alanine 326 contribute to the GTP site. Mg(2+) contacts are provided by serine 47 and threonine 182. The G2 motif stretch occupies residues 174–182 (DILRTRVKT). The tract at residues 197–206 (FKLFDVGGQR) is G3 motif. A G4 motif region spans residues 266-273 (ILFLNKKD). The interval 324–329 (TCATDT) is G5 motif.

The protein belongs to the G-alpha family. G(i/o/t/z) subfamily. In terms of assembly, g proteins are composed of 3 units; alpha, beta and gamma. The alpha chain contains the guanine nucleotide binding site. Expressed primarily in neuronal cell bodies in the brain, optic lobe, and thoracic and abdominal ganglia. Also expressed in antenna, oocytes and ovarian nurse cells.

Guanine nucleotide-binding proteins (G proteins) are involved as modulators or transducers in various transmembrane signaling systems. Plays a role in glial cell differentiation during embryogenesis; loco, Galphai and the G-protein coupled receptor, moody, are required in the surface glia to achieve effective insulation of the nerve cord. The chain is G protein alpha o subunit (Galphao) from Drosophila melanogaster (Fruit fly).